Here is a 465-residue protein sequence, read N- to C-terminus: MARTHFIFLLLVALLSTTFPSSSSSREQEKDRIKALPGQPKVAFSQYSGYVNVNQSHGRALFYWLTESSSPSPHTKPLLLWLNGGPGCSSIAYGASEEIGPFRINKTGSNLYLNKFAWNKDANLLFLESPAGVGYSYTNTSSDLKDSGDERTAQDNLIFLIKWLSRFPQYKYRDFYIAGESYAGHYVPQLAKKINDYNKAFSKPIINLKGFLVGNAVTDNQYDSIGTVTYWWTHAIISDKSYKSILKYCNFTVERVSDDCDNAVNYAMNHEFGDIDQYSIYTPTCVAAQQKKNTTGFFVRMKNTLLRRRLVSGYDPCTESYAEKYFNRPDVQRAMHANVTGIRYKWTACSDVLIKTWKDSDKTMLPIYKELAASGLRIWIFSGDTDSVVPVTATRFSLSHLNLPVKTRWYPWYTDNQVGGWTEVYKGLTFATVRGAGHEVPLFEPKRALILFRSFLAGKELPRSY.

The N-terminal stretch at 1–24 (MARTHFIFLLLVALLSTTFPSSSS) is a signal peptide. 3 N-linked (GlcNAc...) asparagine glycosylation sites follow: N54, N105, and N139. 3 disulfides stabilise this stretch: C88–C349, C249–C260, and C285–C317. Residue S181 is part of the active site. Residues N250, N293, and N338 are each glycosylated (N-linked (GlcNAc...) asparagine). The propeptide at 287–316 (AAQQKKNTTGFFVRMKNTLLRRRLVSGYDP) is linker peptide. Active-site residues include D386 and H438.

This sequence belongs to the peptidase S10 family. Heterodimer. Post-translationally, N-glycosylated. As to expression, expressed in shoots, leaves, cauline leaves, siliques and flowers. Expressed a low levels in roots and stems.

It is found in the secreted. Its subcellular location is the extracellular space. The catalysed reaction is Preferential release of a C-terminal arginine or lysine residue.. With respect to regulation, completely inhibited by phenylmethylsulfonyl fluoride (PMSF) and partially by leupeptin. Active serine carboxypeptidase with broad substrate preference, including basic and hydrophilic groups. Processes a protein involved in an early event in the brassinosteroid signaling pathway. The chain is Serine carboxypeptidase 24 (SCPL24) from Arabidopsis thaliana (Mouse-ear cress).